We begin with the raw amino-acid sequence, 374 residues long: D-amino-acid oxidase 3 (374 aa).

Positions 1–19 (MVKYDAIILGSGVLGLSIA) are cleaved as a signal peptide. FAD-binding residues include Ser11, Leu14, Lys34, Asp35, Ala46, Ser47, and Gly51. The N-linked (GlcNAc...) asparagine glycan is linked to Asn180. Cys214 and Cys271 are oxidised to a cystine. (R)-lactate is bound by residues Tyr229, Tyr246, and Arg296. Positions 229, 246, and 296 each coordinate anthranilate. Positions 296, 342, 345, 346, and 347 each coordinate FAD. The Microbody targeting signal motif lies at 372-374 (AKL).

Belongs to the DAMOX/DASOX family. Requires FAD as cofactor.

It is found in the peroxisome matrix. It catalyses the reaction a D-alpha-amino acid + O2 + H2O = a 2-oxocarboxylate + H2O2 + NH4(+). In terms of biological role, catalyzes the oxidative deamination of D-amino acids with broad substrate specificity. Enables the organism to utilize D-amino acids as a source of nutrients. Enables the organism to utilize D-asparate and D-glutamate as a nitrogen source and may also contribute to utlization of D-tryptophan, D-tyrosine and D-asparagine as a nitrogen source. Protects the organism from the toxicity of D-amino acids, including from D-glutamate. May play a role in its interaction with the host. This chain is D-amino-acid oxidase 3, found in Cryptococcus deuterogattii (strain R265) (Cryptococcus gattii VGII (strain R265)).